A 412-amino-acid chain; its full sequence is G-protein coupled receptor homolog UL33 (412 aa).

The Virion surface segment spans residues 1–29; it reads MDTIIHNSTRNNTPPHINDTCNMTGPLFA. 3 N-linked (GlcNAc...) asparagine; by host glycosylation sites follow: asparagine 7, asparagine 18, and asparagine 22. A helical membrane pass occupies residues 30 to 54; sequence IRTTEAVLNTFIIFVGGPLNAIVLI. The Intravirion portion of the chain corresponds to 55–70; sequence TQLLTNRVLGYSTPTI. The chain crosses the membrane as a helical span at residues 71–95; that stretch reads YMTNLYSTNFLTLTVLPFIVLSNQW. The Virion surface portion of the chain corresponds to 96-102; the sequence is LLPAGVA. The chain crosses the membrane as a helical span at residues 103 to 129; the sequence is SCKFLSVIYYSSCTVGFATVALIAADR. A disulfide bond links cysteine 104 and cysteine 188. The Intravirion portion of the chain corresponds to 130-138; sequence YRVLHKRTY. A helical transmembrane segment spans residues 139 to 160; it reads ARQSYRSTYMILLLTWLAGLIF. Topologically, residues 161–203 are virion surface; the sequence is SVPAAVYTTVVMHHDANDTNNTNGHATCVLYFVAEEVHTVLLS. N-linked (GlcNAc...) asparagine; by host glycosylation is found at asparagine 177 and asparagine 180. The chain crosses the membrane as a helical span at residues 204–224; that stretch reads WKVLLTMVWGAAPVIMMTWFY. The Intravirion portion of the chain corresponds to 225–240; that stretch reads AFFYSTVQRTSQKQRS. Residues 241-267 traverse the membrane as a helical segment; it reads RTLTFVSVLLISFVALQTPYVSLMIFN. Topologically, residues 268-281 are virion surface; sequence SYATTAWPMQCEHL. Residues 282–305 form a helical membrane-spanning segment; sequence TLRRTIGTLARVVPHLHCLINPIL. The Intravirion portion of the chain corresponds to 306 to 412; sequence YALLGHDFLQ…SQSHHNLSGV (107 aa). The interval 377–412 is disordered; sequence NFPSGTWKGGQKTASNDTSTKIPHRLSQSHHNLSGV. The segment covering 388–397 has biased composition (polar residues); the sequence is KTASNDTSTK.

Belongs to the G-protein coupled receptor 1 family. Heterodimerizes with US28.

Its subcellular location is the virion. The protein resides in the host cell membrane. It localises to the host cytoplasm. Its function is as follows. G-protein-coupled receptor (vGPCR) that constitutively activates multiple oncogenic signaling pathways including STAT3, AP-1, phospholipase C, NF-kappa-B or cAMP-responsive element (CRE) pathways. Plays an important role in viral reactivation from latency through activation of host CREB1, facilitating its recruitment to the viral major immediate early (MIE) genes. In turn, expression of the MIE-driven genes such as UL123 are de-repressed. Also facilitates virus dissemination via the extracellular and cell-to-cell route. This Human cytomegalovirus (strain AD169) (HHV-5) protein is G-protein coupled receptor homolog UL33 (UL33).